The chain runs to 340 residues: Cytochrome c peroxidase, mitochondrial (340 aa).

Residues 1-17 (MRSFRAVRNFSTTAKRL) constitute a mitochondrion transit peptide. Catalysis depends on histidine 101, which acts as the Proton acceptor. Residues 175–198 (WKRGRVDEPESASPPDGSLPDASQ) form a disordered region. Histidine 224 provides a ligand contact to heme b. Residue tryptophan 240 is the Tryptophan radical intermediate of the active site.

The protein belongs to the peroxidase family. Cytochrome c peroxidase subfamily. Forms a one-to-one complex with cytochrome c. It depends on heme b as a cofactor.

The protein localises to the mitochondrion matrix. Its subcellular location is the mitochondrion intermembrane space. It carries out the reaction 2 Fe(II)-[cytochrome c] + H2O2 + 2 H(+) = 2 Fe(III)-[cytochrome c] + 2 H2O. Destroys radicals which are normally produced within the cells and which are toxic to biological systems. In Yarrowia lipolytica (strain CLIB 122 / E 150) (Yeast), this protein is Cytochrome c peroxidase, mitochondrial (CCP1).